A 369-amino-acid polypeptide reads, in one-letter code: Small ribosomal subunit biogenesis GTPase RsgA (369 aa).

One can recognise a CP-type G domain in the interval Arg88–Pro246. GTP-binding positions include Asn137–Asp140 and Gly188–Ser196. Zn(2+) is bound by residues Cys271, Cys276, His278, and Cys284. The disordered stretch occupies residues Gln307–Glu369. A compositionally biased stretch (acidic residues) spans Thr359–Glu369.

It belongs to the TRAFAC class YlqF/YawG GTPase family. RsgA subfamily. Monomer. Associates with 30S ribosomal subunit, binds 16S rRNA. Zn(2+) serves as cofactor.

It is found in the cytoplasm. Its function is as follows. One of several proteins that assist in the late maturation steps of the functional core of the 30S ribosomal subunit. Helps release RbfA from mature subunits. May play a role in the assembly of ribosomal proteins into the subunit. Circularly permuted GTPase that catalyzes slow GTP hydrolysis, GTPase activity is stimulated by the 30S ribosomal subunit. The chain is Small ribosomal subunit biogenesis GTPase RsgA from Synechocystis sp. (strain ATCC 27184 / PCC 6803 / Kazusa).